The chain runs to 459 residues: MALINIKAPENIILKPHITVFGVGGAGSNAVNNMIGANLQGANFVVANTDAQSLEYSRCENKIQLGVSTTRGLGAGAAPEVGAAAAQESENEIRNYLENSNMVFITAGMGGGTGTGSAPVIARIAKELGILTVGVVTKPFHFEGGHRMKTADKGIIDLQQFVDTLIVIPNQNLFRIANEQTTFADAFKMADDVLHAGVRGVTDLMIMPGLINLDFADIKAVMSEMGKAMMGTGEASGEDRATKAAESAISNPLLDHSSMCGARGVLINITGGPDMTLFEVDNAANRIREEVNNKDANIIFGSTFNPELKGIIRVSVVATGIDADKIPLYKPVNSSATDLSIEEDEDTKLRAQSTQGDQPVHIEEIPNFNSYSNDEAEIADSLDQAPNSTNDDMEPRVSLTNDAGETPKSSFFVRMWGSLRTQNNNQIPERKNVVVGMPDEETKESDIHDIPAFLRKKRD.

Residues 25-29 (GAGSN), 112-114 (GTG), Glu143, Arg147, and Asp191 contribute to the GTP site. Disordered regions lie at residues 383–405 (DQAPNSTNDDMEPRVSLTNDAGE) and 427–459 (IPERKNVVVGMPDEETKESDIHDIPAFLRKKRD).

This sequence belongs to the FtsZ family. As to quaternary structure, homodimer. Polymerizes to form a dynamic ring structure in a strictly GTP-dependent manner. Interacts directly with several other division proteins.

It localises to the cytoplasm. Its function is as follows. Essential cell division protein that forms a contractile ring structure (Z ring) at the future cell division site. The regulation of the ring assembly controls the timing and the location of cell division. One of the functions of the FtsZ ring is to recruit other cell division proteins to the septum to produce a new cell wall between the dividing cells. Binds GTP and shows GTPase activity. In Rickettsia bellii (strain RML369-C), this protein is Cell division protein FtsZ.